The following is an 834-amino-acid chain: Membrane-associated lipoprotein (834 aa).

The N-terminal stretch at 1–25 (MKKNKLTTLALILPITILTPIVIAS) is a signal peptide. Cysteine 26 carries the N-palmitoyl cysteine lipid modification. Cysteine 26 carries S-diacylglycerol cysteine lipidation. A Lipoprotein-associated type-17 domain is found at 143-237 (RLKDTFDFKL…LLEVSGFKSN (95 aa)).

The protein localises to the cell membrane. The protein is Membrane-associated lipoprotein of Ureaplasma parvum serovar 3 (strain ATCC 700970).